The chain runs to 343 residues: Aspartate carbamoyltransferase catalytic subunit (343 aa).

Carbamoyl phosphate contacts are provided by Arg91 and Thr92. Lys119 contacts L-aspartate. Carbamoyl phosphate-binding residues include Arg141, His171, and Gln174. Positions 204 and 259 each coordinate L-aspartate. The carbamoyl phosphate site is built by Gly300 and Pro301.

Belongs to the aspartate/ornithine carbamoyltransferase superfamily. ATCase family. As to quaternary structure, heterododecamer (2C3:3R2) of six catalytic PyrB chains organized as two trimers (C3), and six regulatory PyrI chains organized as three dimers (R2).

The catalysed reaction is carbamoyl phosphate + L-aspartate = N-carbamoyl-L-aspartate + phosphate + H(+). The protein operates within pyrimidine metabolism; UMP biosynthesis via de novo pathway; (S)-dihydroorotate from bicarbonate: step 2/3. Functionally, catalyzes the condensation of carbamoyl phosphate and aspartate to form carbamoyl aspartate and inorganic phosphate, the committed step in the de novo pyrimidine nucleotide biosynthesis pathway. The protein is Aspartate carbamoyltransferase catalytic subunit of Burkholderia ambifaria (strain MC40-6).